The following is a 101-amino-acid chain: Small ribosomal subunit protein uS14 (101 aa).

Belongs to the universal ribosomal protein uS14 family. Part of the 30S ribosomal subunit. Contacts proteins S3 and S10.

Functionally, binds 16S rRNA, required for the assembly of 30S particles and may also be responsible for determining the conformation of the 16S rRNA at the A site. The polypeptide is Small ribosomal subunit protein uS14 (Acinetobacter baylyi (strain ATCC 33305 / BD413 / ADP1)).